A 236-amino-acid chain; its full sequence is Ubiquinone biosynthesis O-methyltransferase (236 aa).

Arg39, Gly59, Asp80, and Met124 together coordinate S-adenosyl-L-methionine.

The protein belongs to the methyltransferase superfamily. UbiG/COQ3 family.

It carries out the reaction a 3-demethylubiquinol + S-adenosyl-L-methionine = a ubiquinol + S-adenosyl-L-homocysteine + H(+). It catalyses the reaction a 3-(all-trans-polyprenyl)benzene-1,2-diol + S-adenosyl-L-methionine = a 2-methoxy-6-(all-trans-polyprenyl)phenol + S-adenosyl-L-homocysteine + H(+). It functions in the pathway cofactor biosynthesis; ubiquinone biosynthesis. Its function is as follows. O-methyltransferase that catalyzes the 2 O-methylation steps in the ubiquinone biosynthetic pathway. The chain is Ubiquinone biosynthesis O-methyltransferase from Shewanella sp. (strain MR-4).